The sequence spans 295 residues: 3-methyl-2-oxobutanoate hydroxymethyltransferase (295 aa).

Positions 1 to 30 (MTSGRAMSPEETAPYGTGPARAESAPDAPA) are disordered. Mg(2+) is bound by residues D76 and D115. Residues 76–77 (DS), D115, and K145 each bind 3-methyl-2-oxobutanoate. E147 provides a ligand contact to Mg(2+). The active-site Proton acceptor is the E213.

The protein belongs to the PanB family. In terms of assembly, homodecamer; pentamer of dimers. Requires Mg(2+) as cofactor.

The protein localises to the cytoplasm. It catalyses the reaction 3-methyl-2-oxobutanoate + (6R)-5,10-methylene-5,6,7,8-tetrahydrofolate + H2O = 2-dehydropantoate + (6S)-5,6,7,8-tetrahydrofolate. The protein operates within cofactor biosynthesis; (R)-pantothenate biosynthesis; (R)-pantoate from 3-methyl-2-oxobutanoate: step 1/2. Catalyzes the reversible reaction in which hydroxymethyl group from 5,10-methylenetetrahydrofolate is transferred onto alpha-ketoisovalerate to form ketopantoate. The polypeptide is 3-methyl-2-oxobutanoate hydroxymethyltransferase (Nocardioides sp. (strain ATCC BAA-499 / JS614)).